The following is a 622-amino-acid chain: FERM domain-containing protein 6 (622 aa).

An FERM domain is found at 16 to 328 (RRVCIFLPND…NSHRLYMNLQ (313 aa)). The segment at 357 to 452 (LDMDPLEKRS…KDRLEEDSQD (96 aa)) is disordered. Composition is skewed to low complexity over residues 384 to 395 (HSTASHSSSHTS) and 425 to 438 (SSMT…TSGV). Residue serine 522 is modified to Phosphoserine. Position 523 is a phosphothreonine (threonine 523). Residues serine 525, serine 542, and serine 544 each carry the phosphoserine modification.

It is found in the cytoplasm. It localises to the cell membrane. This is FERM domain-containing protein 6 (Frmd6) from Mus musculus (Mouse).